The following is a 404-amino-acid chain: MPYVDRQNRICGFLDIEENENSGKFLRRYFILDTREDSFVWYMDNPQNLPSGSSRVGAIKLTYISKVSDATKLRPKAEFCFVMNAGMRKYFLQANDQQDLVEWVNVLNKAIKITVPKQSDSQPNSDNLSRHGECGKKQVSYRTDIVGGVPIITPTQKEEVNECGESIDRNNLKRSQSHLPYFTPKPPQDSAVIKAGYCVKQGAVMKNWKRRYFQLDENTIGYFKSELEKEPLRVIPLKEVHKVQECKQSDIMMRDNLFEIVTTSRTFYVQADSPEEMHSWIKAVSGAIVAQRGPGRSASSEHPPGPSESKHAFRPTNAATATSHSTASRSNSLVSTFTMEKRGFYESLAKVKPGNFKVQTVSPREPASKVTEQALLRPQSKNGPQEKDCDLVDLDDASLPVSDV.

2 consecutive PH domains span residues 7–112 and 191–289; these read QNRI…KAIK and AVIK…GAIV. 2 disordered regions span residues 291-332 and 355-404; these read QRGP…RSNS and NFKV…VSDV. Over residues 316 to 332 the composition is skewed to low complexity; the sequence is TNAATATSHSTASRSNS. Residues Ser332 and Ser362 each carry the phosphoserine modification.

Interacts with MPDZ and PTPN13. Highly expressed in skeletal muscle, thymus, pancreas, placenta and lung. Detected at low levels in brain, heart, peripheral blood leukocytes, testis, ovary, spinal cord, thyroid, kidney, liver, small intestine and colon.

The protein localises to the cytoplasm. It localises to the cell membrane. The protein resides in the nucleus. Binds specifically to phosphatidylinositol 3,4-diphosphate (PtdIns3,4P2), but not to other phosphoinositides. May recruit other proteins to the plasma membrane. The sequence is that of Pleckstrin homology domain-containing family A member 1 (PLEKHA1) from Homo sapiens (Human).